The sequence spans 180 residues: Large ribosomal subunit protein uL5 (180 aa).

The protein belongs to the universal ribosomal protein uL5 family. Part of the 50S ribosomal subunit; part of the 5S rRNA/L5/L18/L25 subcomplex. Contacts the 5S rRNA and the P site tRNA. Forms a bridge to the 30S subunit in the 70S ribosome.

Its function is as follows. This is one of the proteins that bind and probably mediate the attachment of the 5S RNA into the large ribosomal subunit, where it forms part of the central protuberance. In the 70S ribosome it contacts protein S13 of the 30S subunit (bridge B1b), connecting the 2 subunits; this bridge is implicated in subunit movement. Contacts the P site tRNA; the 5S rRNA and some of its associated proteins might help stabilize positioning of ribosome-bound tRNAs. The polypeptide is Large ribosomal subunit protein uL5 (Clostridium tetani (strain Massachusetts / E88)).